We begin with the raw amino-acid sequence, 475 residues long: Aspartyl/glutamyl-tRNA(Asn/Gln) amidotransferase subunit B (475 aa).

Belongs to the GatB/GatE family. GatB subfamily. Heterotrimer of A, B and C subunits.

It catalyses the reaction L-glutamyl-tRNA(Gln) + L-glutamine + ATP + H2O = L-glutaminyl-tRNA(Gln) + L-glutamate + ADP + phosphate + H(+). It carries out the reaction L-aspartyl-tRNA(Asn) + L-glutamine + ATP + H2O = L-asparaginyl-tRNA(Asn) + L-glutamate + ADP + phosphate + 2 H(+). Allows the formation of correctly charged Asn-tRNA(Asn) or Gln-tRNA(Gln) through the transamidation of misacylated Asp-tRNA(Asn) or Glu-tRNA(Gln) in organisms which lack either or both of asparaginyl-tRNA or glutaminyl-tRNA synthetases. The reaction takes place in the presence of glutamine and ATP through an activated phospho-Asp-tRNA(Asn) or phospho-Glu-tRNA(Gln). The chain is Aspartyl/glutamyl-tRNA(Asn/Gln) amidotransferase subunit B from Bacillus cereus (strain G9842).